A 505-amino-acid chain; its full sequence is DNA repair protein RadA (505 aa).

The C4-type zinc-finger motif lies at 10-27 (CSACGADHAQWFGRCPKC). 107–114 (GDPGIGKS) is an ATP binding site. The RadA KNRFG motif motif lies at 281-285 (KNRFG). A lon-protease-like region spans residues 380–505 (DAYLSVAGGL…KIEEDLGKKD (126 aa)). Residues 485-505 (NTTDQGNGSEAKIEEDLGKKD) form a disordered region. Residues 495-505 (AKIEEDLGKKD) are compositionally biased toward basic and acidic residues.

It belongs to the RecA family. RadA subfamily.

In terms of biological role, DNA-dependent ATPase involved in processing of recombination intermediates, plays a role in repairing DNA breaks. Stimulates the branch migration of RecA-mediated strand transfer reactions, allowing the 3' invading strand to extend heteroduplex DNA faster. Binds ssDNA in the presence of ADP but not other nucleotides, has ATPase activity that is stimulated by ssDNA and various branched DNA structures, but inhibited by SSB. Does not have RecA's homology-searching function. The polypeptide is DNA repair protein RadA (Synechocystis sp. (strain ATCC 27184 / PCC 6803 / Kazusa)).